The primary structure comprises 147 residues: MTLRLNDLKPADGARTERTRVGRGIGSGLGKTAGRGHKGSFARKGGGKIKAGFEGGQTPMQRRLPKIGFRSKMARDTAEVLSYQLDKLDAGDVDFAALRAANLVPSRAKKAKVVLKGELSKKFVLKGVAATAGAKAAIEAAGGSVEE.

Positions Met1–Arg20 are enriched in basic and acidic residues. The interval Met1 to Gln61 is disordered. Residues Arg23–Ala33 are compositionally biased toward gly residues. The span at Gly34–Gly47 shows a compositional bias: basic residues.

The protein belongs to the universal ribosomal protein uL15 family. As to quaternary structure, part of the 50S ribosomal subunit.

Functionally, binds to the 23S rRNA. In Xanthomonas euvesicatoria pv. vesicatoria (strain 85-10) (Xanthomonas campestris pv. vesicatoria), this protein is Large ribosomal subunit protein uL15.